Here is a 628-residue protein sequence, read N- to C-terminus: Biosynthetic arginine decarboxylase (628 aa).

Lysine 99 bears the N6-(pyridoxal phosphate)lysine mark. 279 to 289 contacts substrate; that stretch reads VDVGGGLGIDY.

The protein belongs to the Orn/Lys/Arg decarboxylase class-II family. SpeA subfamily. Mg(2+) serves as cofactor. It depends on pyridoxal 5'-phosphate as a cofactor.

It catalyses the reaction L-arginine + H(+) = agmatine + CO2. Its function is as follows. Catalyzes the biosynthesis of agmatine from arginine. This chain is Biosynthetic arginine decarboxylase, found in Xylella fastidiosa (strain 9a5c).